Here is a 314-residue protein sequence, read N- to C-terminus: Olfactory receptor 2Z1 (314 aa).

Residues 1-25 (MGDVNQSVASDFILVGLFSHSGSRQ) lie on the Extracellular side of the membrane. N-linked (GlcNAc...) asparagine glycosylation occurs at asparagine 5. A helical membrane pass occupies residues 26–49 (LLFSLVAVMFVIGLLGNTVLLFLI). Residues 50–57 (RVDSRLHT) are Cytoplasmic-facing. Residues 58-79 (PMYFLLSQLSLFDIGCPMVTIP) traverse the membrane as a helical segment. At 80–100 (KMASDFLRGEGATSYGGGAAQ) the chain is on the extracellular side. The chain crosses the membrane as a helical span at residues 101-120 (IFFLTLMGVAEGVLLVLMSY). The Cytoplasmic segment spans residues 121-139 (DRYVAVCQPLQYPVLMRRQ). The helical transmembrane segment at 140 to 158 (VCLLMMGSSWVVGVLNASI) threads the bilayer. Topologically, residues 159–195 (QTSITLHFPYCASRIVDHFFCEVPALLKLSCADTCAY) are extracellular. A helical membrane pass occupies residues 196–219 (EMALSTSGVLILMLPLSLIATSYG). The Cytoplasmic segment spans residues 220–236 (HVLQAVLSMRSEEARHK). The chain crosses the membrane as a helical span at residues 237–259 (AVTTCSSHITVVGLFYGAAVFMY). Residues 260–272 (MVPCAYHSPQQDN) lie on the Extracellular side of the membrane. A helical membrane pass occupies residues 273–292 (VVSLFYSLVTPTLNPLIYSL). The Cytoplasmic portion of the chain corresponds to 293–314 (RNPEVWMALVKVLSRAGLRQMC).

It belongs to the G-protein coupled receptor 1 family.

The protein resides in the cell membrane. Functionally, odorant receptor. This Homo sapiens (Human) protein is Olfactory receptor 2Z1 (OR2Z1).